Here is a 231-residue protein sequence, read N- to C-terminus: Uridylate kinase (231 aa).

Residue 9 to 12 participates in ATP binding; sequence KLSG. UMP is bound at residue Gly49. ATP is bound by residues Gly50 and Arg54. UMP contacts are provided by residues Asp69 and 130-137; that span reads AGMPYFST. ATP is bound by residues Asn158, Tyr164, and Asp167.

The protein belongs to the UMP kinase family. Homohexamer.

Its subcellular location is the cytoplasm. It carries out the reaction UMP + ATP = UDP + ADP. It participates in pyrimidine metabolism; CTP biosynthesis via de novo pathway; UDP from UMP (UMPK route): step 1/1. Its activity is regulated as follows. Inhibited by UTP. Catalyzes the reversible phosphorylation of UMP to UDP. In Tropheryma whipplei (strain Twist) (Whipple's bacillus), this protein is Uridylate kinase.